The following is a 187-amino-acid chain: uncharacterized protein (187 aa).

Residues 26–157 (NRHAAVLLPI…YLDVSRRGQQ (132 aa)) enclose the Nudix hydrolase domain. Residues 64 to 86 (GVADPKDKSIIATALREAEEEVN) carry the Nudix box motif. The Mg(2+) site is built by glutamate 80 and glutamate 84.

It belongs to the Nudix hydrolase family. PCD1 subfamily. The cofactor is Mn(2+). Mg(2+) is required as a cofactor.

In terms of biological role, probably mediates the hydrolysis of some nucleoside diphosphate derivatives. This is an uncharacterized protein from Photorhabdus laumondii subsp. laumondii (strain DSM 15139 / CIP 105565 / TT01) (Photorhabdus luminescens subsp. laumondii).